The following is a 1276-amino-acid chain: Sterol regulatory element-binding protein cleavage-activating protein (1276 aa).

Residues 1–18 (MTLTERLREKISQAFYNH) lie on the Cytoplasmic side of the membrane. Residues 19–39 (GLLCASYPIPIILFTGLCILA) form a helical membrane-spanning segment. At 40 to 279 (CCYPLLKLPL…NLVHVHFKEE (240 aa)) the chain is on the lumenal side. The segment at 46–284 (KLPLPGTGPV…HFKEEIGIAE (239 aa)) is loop-1. The segment at 60–81 (PVKGYSPPPADSDHKQGEPSEQ) is disordered. Asparagine 263 carries N-linked (GlcNAc...) asparagine glycosylation. A helical membrane pass occupies residues 280-300 (IGIAELIPLVTTYIILFAYIY). An SSD domain is found at 284–442 (ELIPLVTTYI…MLFFTTVLSI (159 aa)). The Cytoplasmic portion of the chain corresponds to 301 to 312 (FSTRKIDMVKSK). The helical transmembrane segment at 313-333 (WGLALAAVVTVLSSLLMSVGL) threads the bilayer. Over 334-344 (CTLFGLTPTLN) the chain is Lumenal. The helical transmembrane segment at 345-365 (GGEIFPYLVVVIGLENVLVLT) threads the bilayer. Residues 366–401 (KSVVSTPVDLEVKLRIAQGLSSESWSIMKNVATELG) lie on the Cytoplasmic side of the membrane. The chain crosses the membrane as a helical span at residues 402-422 (IILIGYFTLVPAIQEFCLFAV). A topological domain (lumenal) is located at residue valine 423. The helical transmembrane segment at 424-444 (GLVSDFFLQMLFFTTVLSIDI) threads the bilayer. The Cytoplasmic portion of the chain corresponds to 445-518 (RRMELADLNK…FLARTRLAQR (74 aa)). An ER export signal motif is present at residues 447-452 (MELADL). Glycyl lysine isopeptide (Lys-Gly) (interchain with G-Cter in ubiquitin) cross-links involve residues lysine 454 and lysine 466. The chain crosses the membrane as a helical span at residues 519 to 539 (LIMAGTVVWIGILVYTDPAGL). A loop-7 region spans residues 535-710 (DPAGLRTYLA…QTHGDITLYK (176 aa)). At 540–707 (RTYLAAQVTE…GGTQTHGDIT (168 aa)) the chain is on the lumenal side. N-linked (GlcNAc...) asparagine glycosylation is found at asparagine 590 and asparagine 641. Residues 708 to 728 (LYKVAALGLAAGIVLVLLLLC) form a helical membrane-spanning segment. The Cytoplasmic segment spans residues 729-1276 (LYRVLCPRNY…YVPSVLEKLD (548 aa)). An interaction with SREBF2 region spans residues 731 to 1276 (RVLCPRNYGQ…YVPSVLEKLD (546 aa)). Residues 771-811 (VLRGHLMDIECLASDGMLLVSCCLAGQVCVWDAQTGDCLTR) form a WD 1 repeat. A phosphoserine mark is found at serine 821, serine 837, serine 843, serine 850, serine 905, and serine 934. The disordered stretch occupies residues 834-903 (ERLSDGGKAS…RHRAGCGRSR (70 aa)). The segment at 928–958 (SALRPPSPGPPLPQASQEEGTAPEKGSPPLA) is disordered. 2 WD repeats span residues 949-999 (APEK…LCCS) and 1002-1039 (EISS…SLSP). Arginine 1048 is modified (omega-N-methylarginine). 4 WD repeats span residues 1074 to 1111 (AHQK…CLFT), 1114 to 1152 (GHSG…RVSH), 1155 to 1192 (AHRG…KLYS), and 1194 to 1232 (QQDL…LLQT).

It belongs to the WD repeat SCAP family. As to quaternary structure, membrane region forms a homotetramer. Component of the SCAP-SREBP complex (composed of SCAP and SREBF1/SREBP1 or SREBF2/SREBP2); interacts with SREBF1/SREBP1 or SREBF2/SREBP2 through its C-terminal cytoplasmic domain. Forms a ternary complex with INSIG1 or INSIG2 through its transmembrane domains at high sterol concentrations. Interacts with PAQR3; the interaction anchors the SCAP-SREBP complex to the Golgi apparatus in low cholesterol conditions. Interacts with the SEC23-SEC24 complex in a SAR1-GTP-dependent manner through an ER export signal in its third cytoplasmic loop. Interacts with RNF139; the interaction inhibits the interaction of SCAP with SEC24B and hampering the ER to Golgi transport of the SCAP-SREBP complex. Interacts with SPRING1. In terms of processing, ubiquitinated at Lys-454 and Lys-466. RNF145 triggers ubiquitination of SCAP, likely inhibiting SCAP-SREBP complex transport to the Golgi apparatus and the subsequent processing/maturation of SREBF2/SREBP2.

Its subcellular location is the endoplasmic reticulum membrane. The protein resides in the golgi apparatus membrane. It is found in the cytoplasmic vesicle. It localises to the COPII-coated vesicle membrane. In terms of biological role, escort protein required for cholesterol as well as lipid homeostasis. Regulates export of the SCAP-SREBP complex from the endoplasmic reticulum to the Golgi upon low cholesterol, thereby regulating the processing of sterol regulatory element-binding proteins (SREBPs) SREBF1/SREBP1 and SREBF2/SREBP2. At high sterol concentrations, formation of a ternary complex with INSIG (INSIG1 or INSIG2) leads to mask the ER export signal in SCAP, promoting retention of the complex in the endoplasmic reticulum. Low sterol concentrations trigger release of INSIG, a conformational change in the SSD domain of SCAP, unmasking of the ER export signal, promoting recruitment into COPII-coated vesicles and transport of the SCAP-SREBP to the Golgi: in the Golgi, SREBPs are then processed, releasing the transcription factor fragment of SREBPs from the membrane, its import into the nucleus and up-regulation of LDLR, INSIG1 and the mevalonate pathway. Binds cholesterol via its SSD domain. The polypeptide is Sterol regulatory element-binding protein cleavage-activating protein (Rattus norvegicus (Rat)).